The sequence spans 323 residues: tRNA-modifying protein YgfZ (323 aa).

2 residues coordinate folate: W29 and W182.

Belongs to the tRNA-modifying YgfZ family.

Its subcellular location is the cytoplasm. Functionally, folate-binding protein involved in regulating the level of ATP-DnaA and in the modification of some tRNAs. It is probably a key factor in regulatory networks that act via tRNA modification, such as initiation of chromosomal replication. The chain is tRNA-modifying protein YgfZ from Vibrio cholerae serotype O1 (strain M66-2).